We begin with the raw amino-acid sequence, 393 residues long: tRNA(Met) cytidine acetate ligase (393 aa).

Gly-81, Asn-142, and Arg-167 together coordinate ATP.

This sequence belongs to the TmcAL family.

The protein resides in the cytoplasm. The enzyme catalyses cytidine(34) in elongator tRNA(Met) + acetate + ATP = N(4)-acetylcytidine(34) in elongator tRNA(Met) + AMP + diphosphate. Catalyzes the formation of N(4)-acetylcytidine (ac(4)C) at the wobble position of elongator tRNA(Met), using acetate and ATP as substrates. First activates an acetate ion to form acetyladenylate (Ac-AMP) and then transfers the acetyl group to tRNA to form ac(4)C34. The polypeptide is tRNA(Met) cytidine acetate ligase (Bacillus cereus (strain ATCC 10987 / NRS 248)).